A 634-amino-acid polypeptide reads, in one-letter code: Transcription termination factor FttA (634 aa).

The KHa stretch occupies residues 4–69; it reads EEVLENIRKE…ISIRPDPSVL (66 aa). The tract at residues 70–137 is KHb; it reads VEPEIAKQKI…WAPKPVRTPP (68 aa). The tract at residues 179-381 is metallo-beta-lactamase N-terminus; the sequence is WIRVSFLGGA…LIIESTYGAY (203 aa). 6 residues coordinate Zn(2+): histidine 240, histidine 242, aspartate 244, histidine 245, histidine 327, and aspartate 350. Positions 382-575 are beta-Casp; the sequence is DDVLPEREEA…LQVYTIEGFS (194 aa). The tract at residues 576–634 is metallo-beta-lactamase C-terminus; the sequence is GHSDRKQLIKYIRRLKPSPEKIIMVHGEESKCLDFADTVRRLFKKQTYVPMNLDAIRVK. Histidine 601 is a binding site for Zn(2+).

It belongs to the metallo-beta-lactamase superfamily. RNA-metabolizing metallo-beta-lactamase-like family. FttA subfamily. Homodimer. Interacts with RNA polymerase (RNAP), interacts with the Spt4-Spt5 complex. Zn(2+) is required as a cofactor.

Optimal NaCl concentration is 100 mM for nuclease activity on RNA. Functionally, terminates transcription on the whole genome. Termination is linked to FttA-mediated RNA cleavage and does not require NTP hydrolysis. Cleaves endonucleolytically at the RNA exit channel of RNA polymerase (RNAP); the 5'-3' exonuclease activity of this protein degrades the nascent RNA released from RNAP. In terms of biological role, an endoribonuclease with no apparent exonuclease activity, has low activity on single-stranded DNA (endodeoxyribonuclease, endoDNase). This chain is Transcription termination factor FttA, found in Methanocaldococcus jannaschii (strain ATCC 43067 / DSM 2661 / JAL-1 / JCM 10045 / NBRC 100440) (Methanococcus jannaschii).